The following is a 78-amino-acid chain: Pigment-dispersing hormone 1 peptides (78 aa).

The first 22 residues, 1–22 (MRSSVIVAVLVVVALAALLTQG), serve as a signal peptide directing secretion. At A75 the chain carries Alanine amide.

The protein belongs to the arthropod PDH family. In terms of tissue distribution, eyestalk sinus gland.

The protein resides in the secreted. Functionally, the pigment-dispersing hormone causes the migration of the distal retinal pigment into the proximal end of the pigment chromatophore cells and thus decreases the amount of light entering the retinulas. May also function as a neurotransmitter and/or neuromodulator. This is Pigment-dispersing hormone 1 peptides (PDH1) from Callinectes sapidus (Blue crab).